The chain runs to 375 residues: Growth/differentiation factor 8 (375 aa).

Positions 1 to 23 (MQKLQIFVYIYLFMLLVAGPVDL) are cleaved as a signal peptide. Positions 24 to 266 (NENSEQKENV…VTDTPKRSRR (243 aa)) are excised as a propeptide. Residues Asn-48 and Asn-71 are each glycosylated (N-linked (GlcNAc...) asparagine). 4 disulfide bridges follow: Cys-272–Cys-282, Cys-281–Cys-340, Cys-309–Cys-372, and Cys-313–Cys-374.

The protein belongs to the TGF-beta family. In terms of assembly, homodimer; disulfide-linked. Interacts with WFIKKN2, leading to inhibit its activity. Interacts with FSTL3. Synthesized as large precursor molecule that undergoes proteolytic cleavage to generate an N-terminal propeptide and a disulfide linked C-terminal dimer, which is the biologically active molecule. The circulating form consists of a latent complex of the C-terminal dimer and other proteins, including its propeptide, which maintain the C-terminal dimer in a latent, inactive state. Ligand activation requires additional cleavage of the prodomain by a tolloid-like metalloproteinase.

The protein localises to the secreted. Its function is as follows. Acts specifically as a negative regulator of skeletal muscle growth. This is Growth/differentiation factor 8 (MSTN) from Ovis aries (Sheep).